Reading from the N-terminus, the 240-residue chain is Orotidine 5'-phosphate decarboxylase (240 aa).

Residues Asp-15, Lys-37, Asp-64–Thr-73, Thr-127, Arg-188, Gln-197, Gly-217, and Arg-218 contribute to the substrate site. The active-site Proton donor is the Lys-66.

This sequence belongs to the OMP decarboxylase family. Type 1 subfamily. In terms of assembly, homodimer.

It carries out the reaction orotidine 5'-phosphate + H(+) = UMP + CO2. It participates in pyrimidine metabolism; UMP biosynthesis via de novo pathway; UMP from orotate: step 2/2. In terms of biological role, catalyzes the decarboxylation of orotidine 5'-monophosphate (OMP) to uridine 5'-monophosphate (UMP). In Citrifermentans bemidjiense (strain ATCC BAA-1014 / DSM 16622 / JCM 12645 / Bem) (Geobacter bemidjiensis), this protein is Orotidine 5'-phosphate decarboxylase.